The following is a 378-amino-acid chain: Leukosialin (378 aa).

The signal sequence occupies residues 1-7; the sequence is WAQVVSQ. Residues 8–231 are Extracellular-facing; it reads ENLPNTMTML…TVPPRPGSSG (224 aa). Residues Thr-13, Thr-15, and Thr-20 are each glycosylated (O-linked (GalNAc...) threonine). The segment at 13–33 is disordered; sequence TMTMLPFTPNSESPSTSEALS. Residues Ser-23, Ser-25, and Ser-27 are each glycosylated (O-linked (GalNAc...) serine). Thr-28 is a glycosylation site (O-linked (GalNAc...) threonine). O-linked (GalNAc...) serine glycans are attached at residues Ser-29 and Ser-33. The O-linked (GalNAc...) threonine glycan is linked to Thr-34. O-linked (GalNAc...) serine glycosylation is found at Ser-36 and Ser-37. O-linked (GalNAc...) threonine glycosylation occurs at Thr-40. Residues Ser-108 and Ser-113 are each glycosylated (O-linked (GalNAc...) serine). O-linked (GalNAc...) threonine glycans are attached at residues Thr-118, Thr-120, and Thr-124. O-linked (GalNAc...) serine glycans are attached at residues Ser-125 and Ser-126. Thr-174 carries an O-linked (GalNAc...) threonine glycan. Ser-176 and Ser-180 each carry an O-linked (GalNAc...) serine glycan. The O-linked (GalNAc...) threonine glycan is linked to Thr-183. Residue Ser-187 is glycosylated (O-linked (GalNAc...) serine). Residue Thr-189 is glycosylated (O-linked (GalNAc...) threonine). A helical membrane pass occupies residues 232 to 254; the sequence is MLLVSMLIALTVVLVLVALLLLW. The tract at residues 255–285 is required for interaction with EZR, MSN and RDX and for co-localization to microvilli; that stretch reads RQRQKRRTGALTLSRGGKRNGTVDAWAGPAR. Residues 255–378 lie on the Cytoplasmic side of the membrane; the sequence is RQRQKRRTGA…AKDGAAPQSL (124 aa). The Nuclear localization signal motif lies at 259–273; the sequence is KRRTGALTLSRGGKR. The segment at 265–378 is disordered; the sequence is LTLSRGGKRN…AKDGAAPQSL (114 aa). Ser-268 carries the post-translational modification Phosphoserine. Thr-276 carries the phosphothreonine modification. Residues 310–321 are compositionally biased toward polar residues; that stretch reads GSGQRPTLTTFF. Ser-311 bears the Phosphoserine mark. Thr-316 carries the phosphothreonine modification. Ser-322 and Ser-326 each carry phosphoserine. Position 330 is a phosphoserine; by PKC/PRKCQ (Ser-330). Ser-354 is modified (phosphoserine). Thr-361 carries the post-translational modification Phosphothreonine.

In terms of assembly, interacts with SIGLEC1. Monomer. Interacts with CTNNB1. Interacts with EZR, MSN and RDX (via FERM domain). Has a high content of sialic acid and O-linked carbohydrate structures. In terms of processing, phosphorylation at Ser-330 is regulated by chemokines, requires its association with ERM proteins (EZR, RDX and MSN) and is essential for its function in the regulation of T-cell trafficking to lymph nodes. Post-translationally, cleavage by CTSG releases its extracellular domain and triggers its intramembrane proteolysis by gamma-secretase releasing the CD43 cytoplasmic tail chain (CD43-ct) which translocates to the nucleus. Sumoylated. Cell surface of thymocytes, T-lymphocytes, neutrophils, plasma cells and myelomas.

The protein resides in the membrane. Its subcellular location is the cell projection. The protein localises to the microvillus. It localises to the uropodium. It is found in the nucleus. The protein resides in the PML body. In terms of biological role, predominant cell surface sialoprotein of leukocytes which regulates multiple T-cell functions, including T-cell activation, proliferation, differentiation, trafficking and migration. Positively regulates T-cell trafficking to lymph-nodes via its association with ERM proteins (EZR, RDX and MSN). Negatively regulates Th2 cell differentiation and predisposes the differentiation of T-cells towards a Th1 lineage commitment. Promotes the expression of IFN-gamma by T-cells during T-cell receptor (TCR) activation of naive cells and induces the expression of IFN-gamma by CD4(+) T-cells and to a lesser extent by CD8(+) T-cells. Plays a role in preparing T-cells for cytokine sensing and differentiation into effector cells by inducing the expression of cytokine receptors IFNGR and IL4R, promoting IFNGR and IL4R signaling and by mediating the clustering of IFNGR with TCR. Acts as a major E-selectin ligand responsible for Th17 cell rolling on activated vasculature and recruitment during inflammation. Mediates Th17 cells, but not Th1 cells, adhesion to E-selectin. Acts as a T-cell counter-receptor for SIGLEC1. Protects cells from apoptotic signals, promoting cell survival. This is Leukosialin (Spn) from Rattus norvegicus (Rat).